Consider the following 396-residue polypeptide: Aspartic protease 1 (396 aa).

A signal peptide spans 1–15; sequence MQTFVLLALVAACSA. The Peptidase A1 domain maps to 68–389; that stretch reads YLGNITLGTP…DIGNGQIGFA (322 aa). A glycan (N-linked (GlcNAc...) asparagine) is linked at Asn71. Asp86 is a catalytic residue. Cysteines 99 and 104 form a disulfide. The active site involves Asp278. Cysteines 313 and 349 form a disulfide.

The protein belongs to the peptidase A1 family. In terms of assembly, interacts with B.thuringiensis endotoxin Cry6Aa; the interaction prevents Cry6Aa proteolysis by host gut proteases.

The protein resides in the cytoplasm. Its subcellular location is the lysosome. It localises to the secreted. Its function is as follows. Aspartic protease, which is part of the necrosis cell death pathway. Promotes B.thuringiensis Cry6Aa stability by preventing its proteolysis by host gut proteases. Required for Cry6Aa-induced necrotic death of intestinal cells. Cry6Aa uptake into the host intestinal cells triggers an increase in intracellular Ca(2+) levels leading to lysosome rupture and to the subsequent release of asp-1 which leads to necrosis. The sequence is that of Aspartic protease 1 from Caenorhabditis elegans.